The following is a 709-amino-acid chain: Pentatricopeptide repeat-containing protein At5g42310, chloroplastic (709 aa).

The transit peptide at 1–54 (MLLLQQPPLVSTRFHSLYFLTHHHHHHHRFFQPPISAFSATTSASLPSPSPSSS) directs the protein to the chloroplast. PPR repeat units follow at residues 196 to 230 (TPLT…GYQS), 231 to 267 (DFVN…KLEL), 268 to 302 (DVQL…GLSA), 303 to 337 (KTAT…GIKP), 338 to 372 (RTRA…GVSP), 373 to 407 (DEHT…DVQP), 408 to 442 (NSFV…GVKP), 443 to 477 (DRQF…GIEP), 478 to 512 (DRVT…GCLP), 513 to 547 (CATT…GILP), 548 to 582 (NVVT…GLKP), 583 to 617 (SSTM…GLKP), 618 to 652 (SLLA…GVKP), and 653 to 687 (DVVT…GCKP).

Belongs to the PPR family. P subfamily. In terms of assembly, interacts with PDE338.

Its subcellular location is the plastid. It is found in the chloroplast stroma. It localises to the chloroplast thylakoid. The protein localises to the chloroplast. In terms of biological role, required for chloroplast protein synthesis and accumulation of subunits of the thylakoid protein complexes. Activates psaC and petA translation by binding their 5'-UTRs. Required for the correct processing of petB and petD mRNAs. Interacts with the petB and petD intergenic region and is required for the generation of petB and petD monocistronic RNAs. The protein is Pentatricopeptide repeat-containing protein At5g42310, chloroplastic of Arabidopsis thaliana (Mouse-ear cress).